Consider the following 603-residue polypeptide: Putative lipase atg15 (603 aa).

Residues 1–20 (MDQPHRRTRKWHLMDLSVST) are Cytoplasmic-facing. Residues 21 to 41 (LLMSLALVLPSCVSAYQPVYF) traverse the membrane as a helical; Signal-anchor for type II membrane protein segment. At 42-603 (RSQEATPFIP…ITPAPILIDL (562 aa)) the chain is on the lumenal side. Residues Asn-166, Asn-201, Asn-223, Asn-281, and Asn-305 are each glycosylated (N-linked (GlcNAc...) asparagine). Catalysis depends on Ser-321, which acts as the Charge relay system. Asn-467 carries an N-linked (GlcNAc...) asparagine glycan.

It belongs to the AB hydrolase superfamily. Lipase family. As to quaternary structure, binds to both phosphatidylinositol (PI) and phosphatidylinositol 3,5-bisphosphate (PIP2).

The protein localises to the endosome. It localises to the multivesicular body membrane. The protein resides in the prevacuolar compartment membrane. The enzyme catalyses a triacylglycerol + H2O = a diacylglycerol + a fatty acid + H(+). Functionally, lipase which is essential for lysis of subvacuolar cytoplasm to vacuole targeted bodies and intravacuolar autophagic bodies. Involved in the lysis of intravacuolar multivesicular body (MVB) vesicles. The intravacuolar membrane disintegration by atg15 is critical to life span extension. This chain is Putative lipase atg15 (atg15), found in Emericella nidulans (strain FGSC A4 / ATCC 38163 / CBS 112.46 / NRRL 194 / M139) (Aspergillus nidulans).